The chain runs to 207 residues: Outer-membrane lipoprotein LolB (207 aa).

A signal peptide spans 1–26 (MSKLKIDTKRRFSLLIALVLIISLSS). Cysteine 27 carries N-palmitoyl cysteine lipidation. The S-diacylglycerol cysteine moiety is linked to residue cysteine 27.

It belongs to the LolB family. Monomer.

It is found in the cell outer membrane. Plays a critical role in the incorporation of lipoproteins in the outer membrane after they are released by the LolA protein. The chain is Outer-membrane lipoprotein LolB from Francisella tularensis subsp. tularensis (strain WY96-3418).